The primary structure comprises 308 residues: GMP synthase [glutamine-hydrolyzing] subunit B (308 aa).

The GMPS ATP-PPase domain occupies 1 to 185; the sequence is MDWGRFVEEK…LGLPEKIYNR (185 aa). ATP is bound at residue 28–34; it reads SGGVDSS.

In terms of assembly, heterodimer composed of a glutamine amidotransferase subunit (A) and a GMP-binding subunit (B).

It catalyses the reaction XMP + L-glutamine + ATP + H2O = GMP + L-glutamate + AMP + diphosphate + 2 H(+). It participates in purine metabolism; GMP biosynthesis; GMP from XMP (L-Gln route): step 1/1. Its function is as follows. Catalyzes the synthesis of GMP from XMP. This Pyrococcus horikoshii (strain ATCC 700860 / DSM 12428 / JCM 9974 / NBRC 100139 / OT-3) protein is GMP synthase [glutamine-hydrolyzing] subunit B (guaAB).